The chain runs to 338 residues: MKILGIESSCDETAAAVVEDGNKILSNIVATQIPFHKMYNGVVPEIASRKHTEWILPVVKQALAEAGLSLKEIDGIAATGRPGLMGSLLVGLTFAKTLAWSSNKPFIAVNHMLGHLYASHLENDIPYPYLGLLVSGGHSIICKVNNFDDIEVLGTTIDDAPGEAFDKVAKFYNLGYPGGAVIDKLAKSGNPKAANFPMPIIHKEGHKYDVSYSGLKTAVINQIDQFWNKDFEKTPENIAAAFQTRAVKILLRPLLDASIDTGLKTIVAGGGVAANSLLREKLAEHKELKCIFPSLKFCTDNAAMIAGLGYHYLKRGDRTPFTVEASARVEGFSKKGRQ.

The Fe cation site is built by H111 and H115. Substrate is bound by residues 133–137 (LVSGG), D166, G179, D183, and N275. D300 provides a ligand contact to Fe cation.

It belongs to the KAE1 / TsaD family. Fe(2+) serves as cofactor.

Its subcellular location is the cytoplasm. It carries out the reaction L-threonylcarbamoyladenylate + adenosine(37) in tRNA = N(6)-L-threonylcarbamoyladenosine(37) in tRNA + AMP + H(+). Required for the formation of a threonylcarbamoyl group on adenosine at position 37 (t(6)A37) in tRNAs that read codons beginning with adenine. Is involved in the transfer of the threonylcarbamoyl moiety of threonylcarbamoyl-AMP (TC-AMP) to the N6 group of A37, together with TsaE and TsaB. TsaD likely plays a direct catalytic role in this reaction. In Treponema denticola (strain ATCC 35405 / DSM 14222 / CIP 103919 / JCM 8153 / KCTC 15104), this protein is tRNA N6-adenosine threonylcarbamoyltransferase.